The sequence spans 176 residues: Large ribosomal subunit protein uL10 (176 aa).

This sequence belongs to the universal ribosomal protein uL10 family. In terms of assembly, part of the ribosomal stalk of the 50S ribosomal subunit. The N-terminus interacts with L11 and the large rRNA to form the base of the stalk. The C-terminus forms an elongated spine to which L12 dimers bind in a sequential fashion forming a multimeric L10(L12)X complex.

Its function is as follows. Forms part of the ribosomal stalk, playing a central role in the interaction of the ribosome with GTP-bound translation factors. The polypeptide is Large ribosomal subunit protein uL10 (Carboxydothermus hydrogenoformans (strain ATCC BAA-161 / DSM 6008 / Z-2901)).